The chain runs to 652 residues: Acetyl-coenzyme A synthetase (652 aa).

Residues 193–196 (RRGK) and Thr312 each bind CoA. ATP contacts are provided by residues 388-390 (GEP), 412-417 (DTWWQT), Asp501, and Arg516. CoA is bound at residue Ser524. Residues Val538, His540, and Val543 each contribute to the Mg(2+) site. Lys611 bears the N6-acetyllysine mark.

The protein belongs to the ATP-dependent AMP-binding enzyme family. The cofactor is Mg(2+). Acetylated. Deacetylation by the SIR2-homolog deacetylase activates the enzyme.

The catalysed reaction is acetate + ATP + CoA = acetyl-CoA + AMP + diphosphate. In terms of biological role, catalyzes the conversion of acetate into acetyl-CoA (AcCoA), an essential intermediate at the junction of anabolic and catabolic pathways. AcsA undergoes a two-step reaction. In the first half reaction, AcsA combines acetate with ATP to form acetyl-adenylate (AcAMP) intermediate. In the second half reaction, it can then transfer the acetyl group from AcAMP to the sulfhydryl group of CoA, forming the product AcCoA. This chain is Acetyl-coenzyme A synthetase, found in Streptomyces avermitilis (strain ATCC 31267 / DSM 46492 / JCM 5070 / NBRC 14893 / NCIMB 12804 / NRRL 8165 / MA-4680).